A 479-amino-acid chain; its full sequence is MFS-type transporter lnaF (479 aa).

11 helical membrane-spanning segments follow: residues 47 to 67 (WIYL…GFTP), 71 to 91 (GLII…SGAI), 104 to 124 (LLCI…GPLI), 136 to 156 (WCFY…VFLL), 177 to 197 (LVGL…LSWG), 208 to 228 (IIGL…VQWW), 250 to 270 (IFSF…PIWF), 283 to 303 (LMSI…AVLV), 306 to 326 (IGFY…GAGL), 344 to 364 (IPFG…VQAV), and 372 to 392 (LAIA…ISVA). N-linked (GlcNAc...) asparagine glycosylation is present at asparagine 416. A helical membrane pass occupies residues 442-462 (LAITQALYVGVALSSLAIVGA).

This sequence belongs to the major facilitator superfamily. TCR/Tet family.

It is found in the cell membrane. Its function is as follows. MFS-type transporter; part of the lnb gene cluster that mediates the biosynthesis of diastereomeric piperazines. Lna and lnb clusters encode sets of enzymes that produce overlapping sets of previously undescribed metabolites such as piperazinomycin-like metabolites or morpholine. The lna and lnb biosynthetic pathways appear to be part of a signaling network that controls the formation of sclerotia, a resilient overwintering structure. May be involved in the secretion of the metabolites produced by the lna and lnb clusters. The chain is MFS-type transporter lnaF from Aspergillus flavus (strain ATCC 200026 / FGSC A1120 / IAM 13836 / NRRL 3357 / JCM 12722 / SRRC 167).